Consider the following 211-residue polypeptide: Ribonuclease P protein component 3 (211 aa).

This sequence belongs to the eukaryotic/archaeal RNase P protein component 3 family. Consists of a catalytic RNA component and at least 4-5 protein subunits.

Its subcellular location is the cytoplasm. The enzyme catalyses Endonucleolytic cleavage of RNA, removing 5'-extranucleotides from tRNA precursor.. Part of ribonuclease P, a protein complex that generates mature tRNA molecules by cleaving their 5'-ends. The sequence is that of Ribonuclease P protein component 3 from Aeropyrum pernix (strain ATCC 700893 / DSM 11879 / JCM 9820 / NBRC 100138 / K1).